The chain runs to 216 residues: Octanoyltransferase (216 aa).

The BPL/LPL catalytic domain occupies 33–212 (AHTPDELWLV…ILSNILGLTA (180 aa)). Residues 72 to 79 (RGGQVTYH), 139 to 141 (SLG), and 152 to 154 (GVA) each bind substrate. The active-site Acyl-thioester intermediate is Cys-170.

The protein belongs to the LipB family.

It localises to the cytoplasm. The catalysed reaction is octanoyl-[ACP] + L-lysyl-[protein] = N(6)-octanoyl-L-lysyl-[protein] + holo-[ACP] + H(+). It functions in the pathway protein modification; protein lipoylation via endogenous pathway; protein N(6)-(lipoyl)lysine from octanoyl-[acyl-carrier-protein]: step 1/2. In terms of biological role, catalyzes the transfer of endogenously produced octanoic acid from octanoyl-acyl-carrier-protein onto the lipoyl domains of lipoate-dependent enzymes. Lipoyl-ACP can also act as a substrate although octanoyl-ACP is likely to be the physiological substrate. The polypeptide is Octanoyltransferase (Saccharophagus degradans (strain 2-40 / ATCC 43961 / DSM 17024)).